The primary structure comprises 152 residues: Putative rho GDP-dissociation inhibitor 2 (152 aa).

It belongs to the Rho GDI family.

The protein localises to the cytoplasm. In terms of biological role, regulates the GDP/GTP exchange reaction of the Rho proteins by inhibiting the dissociation of GDP from them, and the subsequent binding of GTP to them. The polypeptide is Putative rho GDP-dissociation inhibitor 2 (rdiB) (Dictyostelium discoideum (Social amoeba)).